The following is a 456-amino-acid chain: Bifunctional protein GlmU (456 aa).

The segment at 1–229 (MLNNAMSVVI…LSEVEGVNNR (229 aa)) is pyrophosphorylase. Residues 11–14 (LAAG), lysine 25, glutamine 76, 81–82 (GT), 103–105 (YGD), glycine 140, glutamate 154, asparagine 169, and asparagine 227 contribute to the UDP-N-acetyl-alpha-D-glucosamine site. Aspartate 105 serves as a coordination point for Mg(2+). Asparagine 227 is a Mg(2+) binding site. The linker stretch occupies residues 230-250 (LQLSRLERVYQSEQAEKLLLA). An N-acetyltransferase region spans residues 251-456 (GVMLRDPARF…EGWRRPVKKK (206 aa)). UDP-N-acetyl-alpha-D-glucosamine is bound by residues arginine 333 and lysine 351. Histidine 363 acts as the Proton acceptor in catalysis. The UDP-N-acetyl-alpha-D-glucosamine site is built by tyrosine 366 and asparagine 377. Residues alanine 380, 386 to 387 (NY), serine 405, alanine 423, and arginine 440 contribute to the acetyl-CoA site.

In the N-terminal section; belongs to the N-acetylglucosamine-1-phosphate uridyltransferase family. This sequence in the C-terminal section; belongs to the transferase hexapeptide repeat family. Homotrimer. Requires Mg(2+) as cofactor.

Its subcellular location is the cytoplasm. It carries out the reaction alpha-D-glucosamine 1-phosphate + acetyl-CoA = N-acetyl-alpha-D-glucosamine 1-phosphate + CoA + H(+). The catalysed reaction is N-acetyl-alpha-D-glucosamine 1-phosphate + UTP + H(+) = UDP-N-acetyl-alpha-D-glucosamine + diphosphate. The protein operates within nucleotide-sugar biosynthesis; UDP-N-acetyl-alpha-D-glucosamine biosynthesis; N-acetyl-alpha-D-glucosamine 1-phosphate from alpha-D-glucosamine 6-phosphate (route II): step 2/2. It participates in nucleotide-sugar biosynthesis; UDP-N-acetyl-alpha-D-glucosamine biosynthesis; UDP-N-acetyl-alpha-D-glucosamine from N-acetyl-alpha-D-glucosamine 1-phosphate: step 1/1. It functions in the pathway bacterial outer membrane biogenesis; LPS lipid A biosynthesis. Its function is as follows. Catalyzes the last two sequential reactions in the de novo biosynthetic pathway for UDP-N-acetylglucosamine (UDP-GlcNAc). The C-terminal domain catalyzes the transfer of acetyl group from acetyl coenzyme A to glucosamine-1-phosphate (GlcN-1-P) to produce N-acetylglucosamine-1-phosphate (GlcNAc-1-P), which is converted into UDP-GlcNAc by the transfer of uridine 5-monophosphate (from uridine 5-triphosphate), a reaction catalyzed by the N-terminal domain. The protein is Bifunctional protein GlmU of Escherichia coli O45:K1 (strain S88 / ExPEC).